Consider the following 124-residue polypeptide: Small ribosomal subunit protein uS12 (124 aa).

A 3-methylthioaspartic acid modification is found at Asp-89.

Belongs to the universal ribosomal protein uS12 family. As to quaternary structure, part of the 30S ribosomal subunit. Contacts proteins S8 and S17. May interact with IF1 in the 30S initiation complex.

Its function is as follows. With S4 and S5 plays an important role in translational accuracy. Interacts with and stabilizes bases of the 16S rRNA that are involved in tRNA selection in the A site and with the mRNA backbone. Located at the interface of the 30S and 50S subunits, it traverses the body of the 30S subunit contacting proteins on the other side and probably holding the rRNA structure together. The combined cluster of proteins S8, S12 and S17 appears to hold together the shoulder and platform of the 30S subunit. This is Small ribosomal subunit protein uS12 from Yersinia pestis (strain Pestoides F).